The chain runs to 444 residues: Protein kinase C and casein kinase substrate in neurons protein 1 (444 aa).

A phosphoserine mark is found at Ser2 and Ser79. An F-BAR domain is found at 13–283; sequence EETTDSFWEV…AIRGADAQED (271 aa). The stretch at 26 to 275 forms a coiled coil; the sequence is KRTVKRIDDG…HVYRELEQAI (250 aa). Disordered stretches follow at residues 175–194 and 309–386; these read MNSK…LQDK and LPHT…DDSK. Thr184 carries the post-translational modification Phosphothreonine. Residues 314–324 are compositionally biased toward basic and acidic residues; it reads TKKEKQPKKAE. Residues 329–351 are compositionally biased toward polar residues; that stretch reads TNATGAVESTSQAGDRGSVSSYD. 5 positions are modified to phosphoserine: Ser346, Ser348, Ser349, Ser361, and Ser365. The region spanning 385–444 is the SH3 domain; sequence SKGVRVRALYDYDGQEQDELSFKAGDELTKLGEEDEQGWCRGRLDSGQLGLYPANYVEAI. Residue Tyr394 is modified to Phosphotyrosine. Phosphoserine occurs at positions 405 and 430.

It belongs to the PACSIN family. As to quaternary structure, may form heterooligomers with other PACSINs. Interacts with MAPT. Interacts with TRPV4. Interacts (via SH3 domain) with SYNJ1 and WASL. Interacts with DNM2 and DNM3. Interacts with both COBL and DBNL. Identified in a complex composed of COBL, PACSIN1 and WASL. Interacts with EHD1 and EHD3. Homodimer. Interacts (via SH3 domain) with DNM1; the interaction is reduced by DNM1 phosphorylation. Phosphorylated by casein kinase 2 (CK2) and protein kinase C (PKC). As to expression, highly expressed in brain and, at much lower levels, in heart and pancreas.

Its subcellular location is the cytoplasm. It is found in the cell projection. The protein resides in the synapse. It localises to the synaptosome. The protein localises to the ruffle membrane. Its subcellular location is the membrane. It is found in the cytoplasmic vesicle membrane. The protein resides in the cytosol. It localises to the cell membrane. Functionally, plays a role in the reorganization of the microtubule cytoskeleton via its interaction with MAPT; this decreases microtubule stability and inhibits MAPT-induced microtubule polymerization. Plays a role in cellular transport processes by recruiting DNM1, DNM2 and DNM3 to membranes. Plays a role in the reorganization of the actin cytoskeleton and in neuron morphogenesis via its interaction with COBL and WASL, and by recruiting COBL to the cell cortex. Plays a role in the regulation of neurite formation, neurite branching and the regulation of neurite length. Required for normal synaptic vesicle endocytosis; this process retrieves previously released neurotransmitters to accommodate multiple cycles of neurotransmission. Required for normal excitatory and inhibitory synaptic transmission. Binds to membranes via its F-BAR domain and mediates membrane tubulation. In Homo sapiens (Human), this protein is Protein kinase C and casein kinase substrate in neurons protein 1 (PACSIN1).